We begin with the raw amino-acid sequence, 91 residues long: UPF0250 protein PputGB1_4855 (91 aa).

It belongs to the UPF0250 family.

This is UPF0250 protein PputGB1_4855 from Pseudomonas putida (strain GB-1).